Here is a 146-residue protein sequence, read N- to C-terminus: ATP synthase epsilon chain (146 aa).

The protein belongs to the ATPase epsilon chain family. In terms of assembly, F-type ATPases have 2 components, CF(1) - the catalytic core - and CF(0) - the membrane proton channel. CF(1) has five subunits: alpha(3), beta(3), gamma(1), delta(1), epsilon(1). CF(0) has three main subunits: a, b and c.

Its subcellular location is the cell inner membrane. Its function is as follows. Produces ATP from ADP in the presence of a proton gradient across the membrane. In Rhodospirillum centenum (strain ATCC 51521 / SW), this protein is ATP synthase epsilon chain.